We begin with the raw amino-acid sequence, 236 residues long: Probable glutathione S-transferase GSTU6 (236 aa).

Residues 5–84 (GELKLLGVWS…YIDEVWPGGA (80 aa)) enclose the GST N-terminal domain. Glutathione is bound by residues Ser-15, Lys-42, Val-56, and 68–69 (ES). Residues 94-228 (DPYERAVARF…KLLEFRQTLL (135 aa)) form the GST C-terminal domain.

Belongs to the GST superfamily. Tau family. As to expression, expressed in seedling shoots and roots.

It catalyses the reaction RX + glutathione = an S-substituted glutathione + a halide anion + H(+). In terms of biological role, conjugation of reduced glutathione to a wide number of exogenous and endogenous hydrophobic electrophiles. This is Probable glutathione S-transferase GSTU6 (GSTU6) from Oryza sativa subsp. japonica (Rice).